We begin with the raw amino-acid sequence, 400 residues long: Acetate kinase (400 aa).

N10 contacts Mg(2+). K17 contacts ATP. A substrate-binding site is contributed by R91. D150 serves as the catalytic Proton donor/acceptor. ATP-binding positions include 210-214 (HLGNG), 285-287 (DCR), and 333-337 (GIGEN). A Mg(2+)-binding site is contributed by E387.

It belongs to the acetokinase family. As to quaternary structure, homodimer. It depends on Mg(2+) as a cofactor. The cofactor is Mn(2+).

It localises to the cytoplasm. The enzyme catalyses acetate + ATP = acetyl phosphate + ADP. The protein operates within metabolic intermediate biosynthesis; acetyl-CoA biosynthesis; acetyl-CoA from acetate: step 1/2. In terms of biological role, catalyzes the formation of acetyl phosphate from acetate and ATP. Can also catalyze the reverse reaction. The polypeptide is Acetate kinase (Salmonella typhi).